Reading from the N-terminus, the 222-residue chain is Glutathione transferase GST 23 (222 aa).

The region spanning 4 to 83 (KGVKVLGMWA…YIDEVWKGGY (80 aa)) is the GST N-terminal domain. Glutathione is bound by residues serine 14, lysine 41, valine 55, and 67–68 (ES). The GST C-terminal domain occupies 89–220 (DPYERAQARF…ANKARREQLL (132 aa)).

Belongs to the GST superfamily.

It carries out the reaction RX + glutathione = an S-substituted glutathione + a halide anion + H(+). Its function is as follows. Involved in multiple disease resistance (MDR). This Zea mays (Maize) protein is Glutathione transferase GST 23.